A 558-amino-acid polypeptide reads, in one-letter code: Glucose-6-phosphate isomerase (558 aa).

A2 is modified (N-acetylalanine). N6-acetyllysine is present on K12. At K34 the chain carries N6-(2-hydroxyisobutyryl)lysine. S107 is subject to Phosphoserine. At T109 the chain carries Phosphothreonine. K142 bears the N6-acetyllysine mark. 159–160 is a D-glucose 6-phosphate binding site; the sequence is GS. S185 is modified (phosphoserine; by CK2). Residue 210–215 participates in D-glucose 6-phosphate binding; the sequence is SKTFTT. T250 carries the phosphothreonine modification. The D-glucose 6-phosphate site is built by Q354, E358, and H389. E358 functions as the Proton donor in the catalytic mechanism. Residue H389 is part of the active site. K454 carries the N6-acetyllysine; alternate modification. K454 carries the post-translational modification N6-malonyllysine; alternate. An N6-succinyllysine; alternate modification is found at K454. S455 carries the phosphoserine modification. K519 is a binding site for D-glucose 6-phosphate. The active site involves K519.

The protein belongs to the GPI family. Homodimer in the catalytically active form, monomer in the secreted form. In terms of processing, phosphorylation at Ser-185 by CK2 has been shown to decrease enzymatic activity and may contribute to secretion by a non-classical secretory pathway. ISGylated.

Its subcellular location is the cytoplasm. It is found in the secreted. It catalyses the reaction alpha-D-glucose 6-phosphate = beta-D-fructose 6-phosphate. The protein operates within carbohydrate degradation; glycolysis; D-glyceraldehyde 3-phosphate and glycerone phosphate from D-glucose: step 2/4. Functionally, in the cytoplasm, catalyzes the conversion of glucose-6-phosphate to fructose-6-phosphate, the second step in glycolysis, and the reverse reaction during gluconeogenesis. Besides it's role as a glycolytic enzyme, also acts as a secreted cytokine: acts as an angiogenic factor (AMF) that stimulates endothelial cell motility. Acts as a neurotrophic factor, neuroleukin, for spinal and sensory neurons. It is secreted by lectin-stimulated T-cells and induces immunoglobulin secretion. The polypeptide is Glucose-6-phosphate isomerase (Sus scrofa (Pig)).